Here is a 424-residue protein sequence, read N- to C-terminus: Serine--tRNA ligase (424 aa).

Residue 230–232 (TAE) coordinates L-serine. An ATP-binding site is contributed by 261 to 263 (RSE). Glu284 serves as a coordination point for L-serine. ATP is bound at residue 348–351 (EISS). Ser382 serves as a coordination point for L-serine.

It belongs to the class-II aminoacyl-tRNA synthetase family. Type-1 seryl-tRNA synthetase subfamily. Homodimer. The tRNA molecule binds across the dimer.

Its subcellular location is the cytoplasm. It carries out the reaction tRNA(Ser) + L-serine + ATP = L-seryl-tRNA(Ser) + AMP + diphosphate + H(+). The enzyme catalyses tRNA(Sec) + L-serine + ATP = L-seryl-tRNA(Sec) + AMP + diphosphate + H(+). It participates in aminoacyl-tRNA biosynthesis; selenocysteinyl-tRNA(Sec) biosynthesis; L-seryl-tRNA(Sec) from L-serine and tRNA(Sec): step 1/1. Functionally, catalyzes the attachment of serine to tRNA(Ser). Is also able to aminoacylate tRNA(Sec) with serine, to form the misacylated tRNA L-seryl-tRNA(Sec), which will be further converted into selenocysteinyl-tRNA(Sec). The sequence is that of Serine--tRNA ligase from Solibacter usitatus (strain Ellin6076).